The following is a 395-amino-acid chain: RNA polymerase II elongation factor ELL3 (395 aa).

2 disordered regions span residues 129–177 (LTEG…SEPM) and 189–281 (PSRE…SPEE). Ser-242 is subject to Phosphoserine. Acidic residues predominate over residues 243-260 (QEGEDWGQDEDEEGDEDG). Over residues 269 to 279 (SAPSASESPSP) the composition is skewed to low complexity. Residues 283 to 393 (PDYLLQYRAI…LILEFEEKNR (111 aa)) form the OCEL domain.

It belongs to the ELL/occludin family. Component of the little elongation complex (LEC), at least composed of ELL (ELL, ELL2 or ELL3), ZC3H8, ICE1 and ICE2. Component of the super elongation complex (SEC), at least composed of EAF1, EAF2, CDK9, MLLT3/AF9, AFF (AFF1 or AFF4), the P-TEFb complex and ELL (ELL, ELL2 or ELL3). Interacts with AFF4. Actively expressed in embryonic stem cells (ES cells), while it is weakly expressed in differentiated cells.

The protein resides in the nucleus. In terms of biological role, enhancer-binding elongation factor that specifically binds enhancers in embryonic stem cells (ES cells), marks them, and is required for their future activation during stem cell specification. Elongation factor component of the super elongation complex (SEC), a complex required to increase the catalytic rate of RNA polymerase II transcription by suppressing transient pausing by the polymerase at multiple sites along the DNA. Component of the little elongation complex (LEC), a complex required to regulate small nuclear RNA (snRNA) gene transcription by RNA polymerase II and III. Does not only bind to enhancer regions of active genes, but also marks the enhancers that are in a poised or inactive state in ES cells and is required for establishing proper RNA polymerase II occupancy at developmentally regulated genes in a cohesin-dependent manner. Probably required for priming developmentally regulated genes for later recruitment of the super elongation complex (SEC), for transcriptional activation during differentiation. Required for recruitment of P-TEFb within SEC during differentiation. Probably preloaded on germ cell chromatin, suggesting that it may prime gene activation by marking enhancers as early as in the germ cells. Promoting epithelial-mesenchymal transition (EMT). The polypeptide is RNA polymerase II elongation factor ELL3 (Ell3) (Mus musculus (Mouse)).